A 720-amino-acid polypeptide reads, in one-letter code: Glutaryl-7-aminocephalosporanic-acid acylase (720 aa).

Positions 1 to 29 (MLRVLHRAASALVMATVIGLAPGVAFALA) are cleaved as a signal peptide. A propeptide spans 188-198 (EGDPPDLADQG) (spacer peptide). Ser-199 acts as the Nucleophile in catalysis. Catalysis depends on residues His-221 and Glu-653.

It belongs to the peptidase S45 family. In terms of assembly, heterodimer of a small subunit and a large subunit processed from the same precursor.

Its subcellular location is the periplasm. It catalyses the reaction (7R)-7-(4-carboxybutanamido)cephalosporanate + H2O = (7R)-7-aminocephalosporanate + glutarate. Functionally, catalyzes the deacylation of 7 beta-(4-carboxybutanamido)cephalosporanic acid (glutaryl-7-aminocephalosporanic acid or GL-7-ACA) to 7-aminocephalosporanic acid (7-ACA). Cannot efficiently use cephalosporin C (CPC), penicillin G, or ampicillin as substrates. The protein is Glutaryl-7-aminocephalosporanic-acid acylase of Brevundimonas diminuta (Pseudomonas diminuta).